Consider the following 277-residue polypeptide: Bis(5'-nucleosyl)-tetraphosphatase, symmetrical (277 aa).

This sequence belongs to the Ap4A hydrolase family.

The enzyme catalyses P(1),P(4)-bis(5'-adenosyl) tetraphosphate + H2O = 2 ADP + 2 H(+). In terms of biological role, hydrolyzes diadenosine 5',5'''-P1,P4-tetraphosphate to yield ADP. This chain is Bis(5'-nucleosyl)-tetraphosphatase, symmetrical, found in Azotobacter vinelandii (strain DJ / ATCC BAA-1303).